The primary structure comprises 476 residues: Replication factor C large subunit (476 aa).

An ATP-binding site is contributed by 50–57 (GPPGVGKT). A disordered region spans residues 447 to 476 (YEKGTKKGKGEKRRKGSDEGSGLLKWLKKD). A compositionally biased stretch (basic residues) spans 452–461 (KKGKGEKRRK).

It belongs to the activator 1 small subunits family. RfcL subfamily. In terms of assembly, heteromultimer composed of small subunits (RfcS) and large subunits (RfcL).

Functionally, part of the RFC clamp loader complex which loads the PCNA sliding clamp onto DNA. The sequence is that of Replication factor C large subunit from Ignicoccus hospitalis (strain KIN4/I / DSM 18386 / JCM 14125).